We begin with the raw amino-acid sequence, 355 residues long: Phosphoserine aminotransferase (355 aa).

Position 41 (Arg-41) interacts with L-glutamate. Residues 75-76 (AS), Trp-99, Thr-147, Asp-166, and Gln-189 each bind pyridoxal 5'-phosphate. The residue at position 190 (Lys-190) is an N6-(pyridoxal phosphate)lysine. A pyridoxal 5'-phosphate-binding site is contributed by 231–232 (NT).

This sequence belongs to the class-V pyridoxal-phosphate-dependent aminotransferase family. SerC subfamily. Homodimer. It depends on pyridoxal 5'-phosphate as a cofactor.

The protein localises to the cytoplasm. It catalyses the reaction O-phospho-L-serine + 2-oxoglutarate = 3-phosphooxypyruvate + L-glutamate. The enzyme catalyses 4-(phosphooxy)-L-threonine + 2-oxoglutarate = (R)-3-hydroxy-2-oxo-4-phosphooxybutanoate + L-glutamate. It participates in amino-acid biosynthesis; L-serine biosynthesis; L-serine from 3-phospho-D-glycerate: step 2/3. It functions in the pathway cofactor biosynthesis; pyridoxine 5'-phosphate biosynthesis; pyridoxine 5'-phosphate from D-erythrose 4-phosphate: step 3/5. Catalyzes the reversible conversion of 3-phosphohydroxypyruvate to phosphoserine and of 3-hydroxy-2-oxo-4-phosphonooxybutanoate to phosphohydroxythreonine. In Parabacteroides distasonis (strain ATCC 8503 / DSM 20701 / CIP 104284 / JCM 5825 / NCTC 11152), this protein is Phosphoserine aminotransferase.